The primary structure comprises 327 residues: Spermidine/putrescine import ATP-binding protein PotA (327 aa).

One can recognise an ABC transporter domain in the interval 5 to 235 (IKVEAVEKHF…PKTLFVATFI (231 aa)). 37–44 (GPSGCGKT) is a binding site for ATP.

It belongs to the ABC transporter superfamily. Spermidine/putrescine importer (TC 3.A.1.11.1) family. In terms of assembly, the complex is composed of two ATP-binding proteins (PotA), two transmembrane proteins (PotB and PotC) and a solute-binding protein (PotD).

Its subcellular location is the cell membrane. It catalyses the reaction ATP + H2O + polyamine-[polyamine-binding protein]Side 1 = ADP + phosphate + polyamineSide 2 + [polyamine-binding protein]Side 1.. Functionally, part of the ABC transporter complex PotABCD involved in spermidine/putrescine import. Responsible for energy coupling to the transport system. The chain is Spermidine/putrescine import ATP-binding protein PotA from Bacillus thuringiensis (strain Al Hakam).